The chain runs to 471 residues: Cysteine--tRNA ligase (471 aa).

Zn(2+) is bound at residue cysteine 29. The 'HIGH' region signature appears at 31–41 (PTVYNYIHIGN). Residues cysteine 209, histidine 234, and glutamate 238 each coordinate Zn(2+). Positions 266–270 (KMSKS) match the 'KMSKS' region motif. Residue lysine 269 coordinates ATP.

Belongs to the class-I aminoacyl-tRNA synthetase family. Monomer. It depends on Zn(2+) as a cofactor.

Its subcellular location is the cytoplasm. The enzyme catalyses tRNA(Cys) + L-cysteine + ATP = L-cysteinyl-tRNA(Cys) + AMP + diphosphate. In Listeria welshimeri serovar 6b (strain ATCC 35897 / DSM 20650 / CCUG 15529 / CIP 8149 / NCTC 11857 / SLCC 5334 / V8), this protein is Cysteine--tRNA ligase.